A 203-amino-acid chain; its full sequence is Outer-membrane lipoprotein LolB (203 aa).

The first 18 residues, 1-18, serve as a signal peptide directing secretion; it reads MTLRSFLILLLSSIVLAG. A lipid anchor (N-palmitoyl cysteine) is attached at Cys19. A lipid anchor (S-diacylglycerol cysteine) is attached at Cys19.

This sequence belongs to the LolB family. As to quaternary structure, monomer.

Its subcellular location is the cell outer membrane. Functionally, plays a critical role in the incorporation of lipoproteins in the outer membrane after they are released by the LolA protein. This Vibrio campbellii (strain ATCC BAA-1116) protein is Outer-membrane lipoprotein LolB.